The sequence spans 881 residues: Serine/threonine-protein kinase/endoribonuclease IRE1b (881 aa).

Residues 1–21 (MRGSALLDLILFLLVSPLAHS) form the signal peptide. At 22–357 (FKGSEISKFY…KQAGFASKFS (336 aa)) the chain is on the lumenal side. A glycan (N-linked (GlcNAc...) asparagine) is linked at Asn-115. The helical transmembrane segment at 358 to 378 (GLIVLIFGFCVTMLSVCGLFF) threads the bilayer. At 379 to 881 (YRLRQSIRIK…FFKYSKTTVF (503 aa)) the chain is on the cytoplasmic side. The Protein kinase domain occupies 459 to 744 (FVSNKEIAKG…AQDVMHHPLF (286 aa)). ATP contacts are provided by residues 465–473 (IAKGSNGTV) and Lys-487. The tract at residues 481–502 (GRLVAVKRLVQSHHDVAQKEIL) is ATP selon article. Residue Asp-608 is the Proton acceptor of the active site. A disordered region spans residues 642–661 (LTRNSTGLGSGSSGWQAPEQ). The 132-residue stretch at 747–878 (SDMRLSFLRD…EEFFFKYSKT (132 aa)) folds into the KEN domain.

This sequence belongs to the protein kinase superfamily. Ser/Thr protein kinase family. As to quaternary structure, homodimer; disulfide-linked. Dimer formation is driven by hydrophobic interactions within the N-terminal luminal domains and stabilized by disulfide bridges. Mg(2+) is required as a cofactor. In terms of processing, autophosphorylated. As to expression, ubiquitous. Detected in the apical meristem, at leaf margins where vascular bundles end, in the anthers before pollen is formed and in the ovules at a very early stage of development. There is no expression in more mature embryos. Also strongly expressed in the cotyledons immediately after germination but not later on.

It is found in the endoplasmic reticulum membrane. The enzyme catalyses L-seryl-[protein] + ATP = O-phospho-L-seryl-[protein] + ADP + H(+). It catalyses the reaction L-threonyl-[protein] + ATP = O-phospho-L-threonyl-[protein] + ADP + H(+). The kinase domain is activated by trans-autophosphorylation. Kinase activity is required for activation of the endoribonuclease domain. Its function is as follows. Senses unfolded proteins in the lumen of the endoplasmic reticulum via its N-terminal domain which leads to enzyme auto-activation. The active endoribonuclease domain splices bZIP60 mRNA to generate a new C-terminus, converting it into a potent unfolded-protein response transcriptional activator which then induces transcription of UPR target genes. Involved in organ growth regulation. Plays a role in plant immunity and abiotic stress responses. Required for ER stress-induced autophagy. This chain is Serine/threonine-protein kinase/endoribonuclease IRE1b (IRE1B), found in Arabidopsis thaliana (Mouse-ear cress).